Consider the following 241-residue polypeptide: MSMLFYTLITAFLIGIQAEPHSESNVPAGHTIPQAHWTKLQHSLDTALRRARSAPAGPIAARVAGQTRNITVDPKLFKKRRLRSPRVLFSTQPPPEAADTQDLDFEVAGAAPVNRTHRSKRSSSHPIFHRGEFSVCDSVSVWVGDKTTATDIKGKEVMVLGEVNINNSVFKQYFFETKCRDPNPVDSGCRGIDSKHWNSYCTTTHTFVKALTMDGKQAAWRFIRIDTACVCVLSRKASRRA.

The signal sequence occupies residues 1 to 18 (MSMLFYTLITAFLIGIQA). A propeptide spanning residues 19-121 (EPHSESNVPA…PVNRTHRSKR (103 aa)) is cleaved from the precursor. N-linked (GlcNAc...) asparagine glycans are attached at residues Asn69, Asn114, and Asn166. Cystine bridges form between Cys136-Cys201, Cys179-Cys229, and Cys189-Cys231.

This sequence belongs to the NGF-beta family. In terms of assembly, homodimer. The homodimer interacts with a single NTRK1 chain. The homodimer interacts with a single NGFR chain. The NGF dimer interacts with a single SORCS2 chain (via extracellular domain). The NGF precursor (proNGF) binds to a receptor complex formed by SORT1 and NGFR, which leads to NGF endocytosis. Both mature NGF and the immature NGF precursor (proNGF) interact with SORCS2 and with the heterodimer formed by SORCS2 and NGFR (via extracellular domains). The NGF precursor (proNGF) has much higher affinity for SORCS2 than mature NGF. The NGF precursor (proNGF) has much higher affinity for SORT1 than mature NGF. Interacts with ADAM10 in a divalent cation-dependent manner. Interacts with SORCS3.

It localises to the secreted. The protein resides in the endosome lumen. Its function is as follows. Nerve growth factor is important for the development and maintenance of the sympathetic and sensory nervous systems. Extracellular ligand for the NTRK1 and NGFR receptors, activates cellular signaling cascades through those receptor tyrosine kinase to regulate neuronal proliferation, differentiation and survival. Inhibits metalloproteinase dependent proteolysis of platelet glycoprotein VI. The polypeptide is Beta-nerve growth factor (NGF) (Saimiri boliviensis boliviensis (Bolivian squirrel monkey)).